The following is a 276-amino-acid chain: Mitochondrial outer membrane protein porin 6 (276 aa).

Belongs to the eukaryotic mitochondrial porin (TC 1.B.8.1) family.

The protein resides in the mitochondrion outer membrane. Functionally, forms a channel through the mitochondrial outer membrane that allows diffusion of small hydrophilic molecules. The channel adopts an open conformation at low or zero membrane potential and a closed conformation at potentials above 30-40 mV. The open state has a weak anion selectivity whereas the closed state is cation-selective. This chain is Mitochondrial outer membrane protein porin 6 (VDAC6), found in Oryza sativa subsp. japonica (Rice).